A 250-amino-acid chain; its full sequence is tRNA (guanine-N(1)-)-methyltransferase (250 aa).

Residues glycine 113 and isoleucine 133 to leucine 138 each bind S-adenosyl-L-methionine.

This sequence belongs to the RNA methyltransferase TrmD family. Homodimer.

Its subcellular location is the cytoplasm. It carries out the reaction guanosine(37) in tRNA + S-adenosyl-L-methionine = N(1)-methylguanosine(37) in tRNA + S-adenosyl-L-homocysteine + H(+). In terms of biological role, specifically methylates guanosine-37 in various tRNAs. This chain is tRNA (guanine-N(1)-)-methyltransferase, found in Photorhabdus laumondii subsp. laumondii (strain DSM 15139 / CIP 105565 / TT01) (Photorhabdus luminescens subsp. laumondii).